The primary structure comprises 375 residues: Protein GOLM2 (375 aa).

Residues 1 to 12 (MVGFGANRRGGR) are Cytoplasmic-facing. A helical; Signal-anchor for type II membrane protein membrane pass occupies residues 13–33 (LPSFLLAALLLVIAVLAFNCW). Residues 34–198 (NAASRQAVLR…REQKATQRIQ (165 aa)) are a coiled coil. The Lumenal segment spans residues 34–375 (NAASRQAVLR…SKPRFGDGVL (342 aa)). 3 disordered regions span residues 81–102 (LEQK…DGQV), 193–327 (ATQR…DSQN), and 342–375 (RAVG…DGVL). 2 stretches are compositionally biased toward basic and acidic residues: residues 193–204 (ATQRIQSSKDAE) and 350–375 (KQND…DGVL).

The protein belongs to the GOLM family.

The protein resides in the membrane. The chain is Protein GOLM2 (GOLM2) from Gallus gallus (Chicken).